Reading from the N-terminus, the 218-residue chain is ATP phosphoribosyltransferase (218 aa).

This sequence belongs to the ATP phosphoribosyltransferase family. Short subfamily. In terms of assembly, heteromultimer composed of HisG and HisZ subunits.

It localises to the cytoplasm. It catalyses the reaction 1-(5-phospho-beta-D-ribosyl)-ATP + diphosphate = 5-phospho-alpha-D-ribose 1-diphosphate + ATP. Its pathway is amino-acid biosynthesis; L-histidine biosynthesis; L-histidine from 5-phospho-alpha-D-ribose 1-diphosphate: step 1/9. In terms of biological role, catalyzes the condensation of ATP and 5-phosphoribose 1-diphosphate to form N'-(5'-phosphoribosyl)-ATP (PR-ATP). Has a crucial role in the pathway because the rate of histidine biosynthesis seems to be controlled primarily by regulation of HisG enzymatic activity. The polypeptide is ATP phosphoribosyltransferase (hisG) (Deinococcus radiodurans (strain ATCC 13939 / DSM 20539 / JCM 16871 / CCUG 27074 / LMG 4051 / NBRC 15346 / NCIMB 9279 / VKM B-1422 / R1)).